The primary structure comprises 302 residues: tRNA pseudouridine synthase B (302 aa).

The Nucleophile role is filled by D38.

It belongs to the pseudouridine synthase TruB family. Type 1 subfamily.

It catalyses the reaction uridine(55) in tRNA = pseudouridine(55) in tRNA. Functionally, responsible for synthesis of pseudouridine from uracil-55 in the psi GC loop of transfer RNAs. The polypeptide is tRNA pseudouridine synthase B (Ligilactobacillus salivarius (strain UCC118) (Lactobacillus salivarius)).